The primary structure comprises 192 residues: UPF0149 protein YPO0911/y3298/YP_3608 (192 aa).

Belongs to the UPF0149 family.

In Yersinia pestis, this protein is UPF0149 protein YPO0911/y3298/YP_3608.